A 215-amino-acid polypeptide reads, in one-letter code: Kunitz trypsin inhibitor 2 (215 aa).

An N-terminal signal peptide occupies residues 1 to 23; sequence MKNPSVISFLIILLFAATICTHG. Cysteine 67 and cysteine 114 form a disulfide bridge. An N-linked (GlcNAc...) asparagine glycan is attached at asparagine 145.

This sequence belongs to the protease inhibitor I3 (leguminous Kunitz-type inhibitor) family. Interacts with RD21A. Interacts with RD21B and RD21C. Expressed in vascular bundles of the carpels, the transmitting tract of the style and septum epidermis. Expressed in etiolated seedlings.

It is found in the secreted. It localises to the cell wall. The protein resides in the extracellular space. Its subcellular location is the apoplast. The protein localises to the endoplasmic reticulum. In terms of biological role, water-soluble and chlorophyll-binding protein that probably does not function as a chloroplast chlorophyll carrier and is not involved in photosynthesis. Involved in the control of cell death in the transmitting tract and septum epidermis during flower development. Binds and inhibits the activity of the cysteine protease RD21A as a pro-death protein. May play a role in herbivore resistance activation during seedling greening. This is Kunitz trypsin inhibitor 2 from Arabidopsis thaliana (Mouse-ear cress).